Here is a 355-residue protein sequence, read N- to C-terminus: Vacuolar protein sorting-associated protein 37C (355 aa).

Position 29 is a phosphoserine (Ser29). The 90-residue stretch at 78 to 167 (VERCQEQKAK…RKPRASQELA (90 aa)) folds into the VPS37 C-terminal domain. Positions 159–355 (KPRASQELAG…PPPGPAWPGY (197 aa)) are disordered. 2 stretches are compositionally biased toward pro residues: residues 170–186 (APPP…PQGT) and 194–205 (PQPPSAMPPYPL). The span at 246–257 (PAAQPGPRGAAG) shows a compositional bias: low complexity. A compositionally biased stretch (pro residues) spans 321-355 (PGQPQPSVPLQPPYPPGPAPPYGFPPPPGPAWPGY).

It belongs to the VPS37 family. In terms of assembly, component of the ESCRT-I complex (endosomal sorting complex required for transport I) which consists of TSG101, VPS28, a VPS37 protein (VPS37A to -D) and MVB12A or MVB12B in a 1:1:1:1 stoichiometry. Interacts with TSG101, VPS28, MVB12A and MVB12B. Component of the ESCRT-I complex (endosomal sorting complex required for transport I) which consists of TSG101, VPS28, a VPS37 protein (VPS37A to -D) and UBAP1 in a 1:1:1:1 stoichiometry. Interacts with HGS and STAM2. Interacts with CEP55. Post-translationally, phosphorylated by TBK1.

Its subcellular location is the late endosome membrane. Functionally, component of the ESCRT-I complex, a regulator of vesicular trafficking process. Required for the sorting of endocytic ubiquitinated cargos into multivesicular bodies. May be involved in cell growth and differentiation. The polypeptide is Vacuolar protein sorting-associated protein 37C (VPS37C) (Pongo abelii (Sumatran orangutan)).